We begin with the raw amino-acid sequence, 246 residues long: MNETPAVPPSPEVEGSLNEQISHRRRILAVLDAMKDGRALLSARIENQRGYFNTTLLKIDAEKGYVFLDELAPADGHEKIAVGQTLHLYGFYNNLPAHFAIEVIHVGEHEGIAFYAGPLPKLIHYQQKRAHFRAYVGLGKELKVRLRKGDGAQISGRLQDISLGGFGALMPADSVFEDLEIVEVEALELPDHHAIACSAEIRHSHPTQGRVHIGARFTQLAPQAERQLLQAIVELEREQLRKQSRD.

Residues 128 to 232 form the PilZ domain; it reads KRAHFRAYVG…QAERQLLQAI (105 aa).

This sequence belongs to the YcgR family. In terms of assembly, monomer. Interacts with the flagellar basal bodies.

The protein resides in the bacterial flagellum basal body. Functionally, acts as a flagellar brake, regulating swimming and swarming in a bis-(3'-5') cyclic diguanylic acid (c-di-GMP)-dependent manner. Binds 1 c-di-GMP dimer per subunit. Increasing levels of c-di-GMP lead to decreased motility. The chain is Flagellar brake protein YcgR from Thioalkalivibrio sulfidiphilus (strain HL-EbGR7).